Here is a 454-residue protein sequence, read N- to C-terminus: Probable ECA polymerase (454 aa).

The next 11 membrane-spanning stretches (helical) occupy residues 6–26 (FSGL…LTWF), 37–57 (VFFS…TSIL), 63–83 (VAVV…CFYA), 122–142 (MMAV…FLLF), 157–177 (GVAL…VYFL), 183–203 (AWLF…MIVG), 209–229 (IIIA…ISPG), 230–250 (MLAA…LKRY), 343–363 (LVVM…GLII), 380–400 (YKAA…IVLA), and 411–431 (VIFF…IYWL).

The protein belongs to the WzyE family. In terms of assembly, probably part of a complex composed of WzxE, WzyE and WzzE.

The protein localises to the cell inner membrane. It functions in the pathway bacterial outer membrane biogenesis; enterobacterial common antigen biosynthesis. Functionally, probably involved in the polymerization of enterobacterial common antigen (ECA) trisaccharide repeat units. The chain is Probable ECA polymerase from Cronobacter sakazakii (strain ATCC BAA-894) (Enterobacter sakazakii).